The chain runs to 160 residues: Cyclic pyranopterin monophosphate synthase (160 aa).

Substrate contacts are provided by residues 77-79 (MCH) and 114-115 (ME). Asp129 is an active-site residue.

It belongs to the MoaC family. As to quaternary structure, homohexamer; trimer of dimers.

It carries out the reaction (8S)-3',8-cyclo-7,8-dihydroguanosine 5'-triphosphate = cyclic pyranopterin phosphate + diphosphate. It participates in cofactor biosynthesis; molybdopterin biosynthesis. In terms of biological role, catalyzes the conversion of (8S)-3',8-cyclo-7,8-dihydroguanosine 5'-triphosphate to cyclic pyranopterin monophosphate (cPMP). This Listeria monocytogenes serovar 1/2a (strain ATCC BAA-679 / EGD-e) protein is Cyclic pyranopterin monophosphate synthase.